A 434-amino-acid chain; its full sequence is Alpha-enolase (434 aa).

Ser-2 is subject to N-acetylserine. The residue at position 5 (Lys-5) is an N6-acetyllysine. Ser-40 is a binding site for Mg(2+). Tyr-44 is modified (phosphotyrosine). The residue at position 60 (Lys-60) is an N6-acetyllysine; alternate. The residue at position 60 (Lys-60) is an N6-succinyllysine; alternate. N6-acetyllysine is present on residues Lys-64 and Lys-71. Lys-89 carries the post-translational modification N6-acetyllysine; alternate. Lys-89 carries the post-translational modification N6-succinyllysine; alternate. Residues Lys-92 and Lys-126 each carry the N6-acetyllysine modification. Substrate-binding residues include His-158 and Glu-167. Residues Lys-193 and Lys-199 each carry the N6-acetyllysine modification. Lys-202 carries the N6-acetyllysine; alternate modification. A Glycyl lysine isopeptide (Lys-Gly) (interchain with G-Cter in SUMO2); alternate cross-link involves residue Lys-202. The Proton donor role is filled by Glu-210. N6-acetyllysine; alternate is present on residues Lys-228 and Lys-233. An N6-succinyllysine; alternate modification is found at Lys-228. Lys-228 is modified (N6-(2-hydroxyisobutyryl)lysine; alternate). N6-malonyllysine; alternate is present on Lys-233. Position 245 (Asp-245) interacts with Mg(2+). At Ser-254 the chain carries Phosphoserine. N6-acetyllysine is present on Lys-256. Ser-263 carries the post-translational modification Phosphoserine. At Lys-281 the chain carries N6-acetyllysine; alternate. An N6-(2-hydroxyisobutyryl)lysine; alternate modification is found at Lys-281. At Tyr-287 the chain carries Phosphotyrosine. Ser-291 is subject to Phosphoserine. Residues Glu-293 and Asp-318 each contribute to the Mg(2+) site. 2 residues coordinate substrate: Glu-293 and Asp-318. Lys-335 and Lys-343 each carry N6-acetyllysine. The Proton acceptor role is filled by Lys-343. Substrate is bound by residues 370–373 (SHRS) and Lys-394. The interval 405-434 (AKYNQILRIEEELGSKAKFAGRSFRNPLAK) is required for interaction with PLG. Lys-406 carries the post-translational modification N6-acetyllysine. N6-acetyllysine; alternate is present on Lys-420. Residue Lys-420 is modified to N6-succinyllysine; alternate. Lys-420 is modified (N6-malonyllysine; alternate).

Belongs to the enolase family. As to quaternary structure, mammalian enolase is composed of 3 isozyme subunits, alpha, beta and gamma, which can form homodimers or heterodimers which are cell-type and development-specific. ENO1 interacts with PLG in the neuronal plasma membrane and promotes its activation. The C-terminal lysine is required for this binding. Interacts with ENO4 and PGAM2. Interacts with CMTM6. The cofactor is Mg(2+). In terms of processing, ISGylated. Post-translationally, lysine 2-hydroxyisobutyrylation (Khib) by p300/EP300 activates the phosphopyruvate hydratase activity. The alpha/alpha homodimer is expressed in embryo and in most adult tissues. The alpha/beta heterodimer and the beta/beta homodimer are found in striated muscle, and the alpha/gamma heterodimer and the gamma/gamma homodimer in neurons.

Its subcellular location is the cytoplasm. It is found in the cell membrane. It carries out the reaction (2R)-2-phosphoglycerate = phosphoenolpyruvate + H2O. Its pathway is carbohydrate degradation; glycolysis; pyruvate from D-glyceraldehyde 3-phosphate: step 4/5. Its function is as follows. Glycolytic enzyme the catalyzes the conversion of 2-phosphoglycerate to phosphoenolpyruvate. In addition to glycolysis, involved in various processes such as growth control, hypoxia tolerance and allergic responses. May also function in the intravascular and pericellular fibrinolytic system due to its ability to serve as a receptor and activator of plasminogen on the cell surface of several cell-types such as leukocytes and neurons. Stimulates immunoglobulin production. This Bos taurus (Bovine) protein is Alpha-enolase (ENO1).